Consider the following 321-residue polypeptide: uncharacterized protein (321 aa).

The next 9 membrane-spanning stretches (helical) occupy residues 12–32 (IGVE…WAAT), 52–72 (LITS…AFLV), 86–106 (ILMS…ILII), 109–129 (LTGL…QQWF), 136–156 (FVIS…LVLA), 168–188 (DSLS…LFVG), 214–234 (WGMI…FTFL), 254–274 (KEIP…GLFF), and 292–312 (IFIC…QIFA).

It is found in the cell membrane. This is an uncharacterized protein from Campylobacter jejuni subsp. jejuni serotype O:2 (strain ATCC 700819 / NCTC 11168).